We begin with the raw amino-acid sequence, 700 residues long: MDTQRLSLRKENGSAHSLLQDQTGLKENTMNIPRDSSFNSIFGPSEVVDDAGTDRDFKHESHKFSITRAMPEKLAGKNIAPFLAKHIPEQYAPLGSHAGEPVESSGANSRYCYRHRPDLKCRRQADEPTMDKLQRIAKELETLPQRDQQGIAHAWSIFSAAPAKHRKLLLQGIMAQCCFPQLSFISASVRDLIRIDFLTALPPEISFKILCYLDTTSLCKAAQVSRRWRALADDDVVWHRMCEQHIHRKCKKCGWGLPLLDRKRLRESKRQIELRAATWDISEQSTEDETGSPAPESASSNAKRKPESDDEDTALVKRHCTSIVPRLEKEKDGDYFITRYRPWKEVYKDRFKVGTNWKYGRCSVKVFKGHTNGIMCLQFEDNILATGSYDATIKIWDTETGEELRTLRGHESGIRCLQFDDTKLISGSMDRSLKVWNWRTGECISTYTGHRGGVIGLHFDATILASASVDKTVKIWNFEDKSTCLLRGHTDWVNAVRVDTNSRTVFSASDDCTIRLWDLDTKTCIRTFHGHVGQVQQVIPLPREFEFEDHDAECENDNVSVTSGDSPAASPRGIPGLDAGTSETQSSPFGPAFDNGRPAPPRYIVTSALDSTIRLWETSTGRCLRTFFGHLEGVWALAADTLRIVSGAEDRMVKIWDPRTGKCERTFTGHSGPVTCIGLGDSRFATGSEDCEVRMYGFQS.

The region spanning 195-241 (IDFLTALPPEISFKILCYLDTTSLCKAAQVSRRWRALADDDVVWHRM) is the F-box domain. Positions 282–313 (SEQSTEDETGSPAPESASSNAKRKPESDDEDT) are disordered. 7 WD repeats span residues 369 to 406 (GHTN…ELRT), 409 to 448 (GHES…STYT), 450 to 486 (HRGG…TCLL), 488 to 529 (GHTD…RTFH), 583 to 626 (ETQS…CLRT), 627 to 666 (FFGH…CERT), and 669 to 700 (GHSG…GFQS). Positions 556–598 (NDNVSVTSGDSPAASPRGIPGLDAGTSETQSSPFGPAFDNGRP) are disordered.

It belongs to the WD repeat MET30/SCONB/SCON-2 family. Component of the SCF(sconB) E3 ubiquitin ligase complex.

The protein operates within protein modification; protein ubiquitination. In terms of biological role, component of the SCF(sconB) E3 ubiquitin ligase complex involved in the regulation of sulfur metabolite repression, probably by mediating the inactivation or degradation of the metR transcription factor. The polypeptide is Probable E3 ubiquitin ligase complex SCF subunit sconB (sconB) (Aspergillus clavatus (strain ATCC 1007 / CBS 513.65 / DSM 816 / NCTC 3887 / NRRL 1 / QM 1276 / 107)).